Here is a 598-residue protein sequence, read N- to C-terminus: Auxin response factor 22 (598 aa).

The segment at residues 124 to 226 (NSFTKVLTAS…ELRVGIRRAG (103 aa)) is a DNA-binding region (TF-B3). The PB1 domain occupies 509-590 (RTCTKVQMQG…MVKKILIFKR (82 aa)).

Belongs to the ARF family. Homodimers and heterodimers.

It is found in the nucleus. Auxin response factors (ARFs) are transcriptional factors that bind specifically to the DNA sequence 5'-TGTCTC-3' found in the auxin-responsive promoter elements (AuxREs). Could act as transcriptional activator or repressor. Formation of heterodimers with Aux/IAA proteins may alter their ability to modulate early auxin response genes expression. This chain is Auxin response factor 22 (ARF22), found in Arabidopsis thaliana (Mouse-ear cress).